The chain runs to 112 residues: Nitrogen regulatory protein GlnK2 (112 aa).

ADP-binding positions include Thr29, Gln38–Gln39, Val64, and Gly87–Lys90. Residues Thr29, Gln38–Gln39, Val64, Gly87–Lys90, and Arg101–Arg103 each bind ATP.

Belongs to the P(II) protein family. As to quaternary structure, homotrimer. Interacts and forms a complex with Amt2.

The protein localises to the cytoplasm. Binding of adenosine nucleotides results in distinct, cooperative behavior for ATP and ADP. GlnK2 is completely insensitive to 2-oxoglutarate at a low level of intracellular nitrogen. Its function is as follows. Involved in the regulation of nitrogen metabolism. Regulates the activity of its targets by protein-protein interaction in response to the nitrogen status of the cell. Regulates the activity of the ammonia channel Amt2 via direct interaction. The sequence is that of Nitrogen regulatory protein GlnK2 from Archaeoglobus fulgidus (strain ATCC 49558 / DSM 4304 / JCM 9628 / NBRC 100126 / VC-16).